The primary structure comprises 823 residues: Aminopeptidase O (823 aa).

His481 is a binding site for Zn(2+). Glu482 functions as the Proton acceptor in the catalytic mechanism. Zn(2+) is bound by residues His485 and Glu504. Residues 693 to 703 (RRPRKRKRGKR) carry the Nucleolar localization signal motif.

The protein belongs to the peptidase M1 family. Zn(2+) is required as a cofactor. Expressed in testis, heart, brain, lung, liver, skeletal muscle, kidney and ovary. Expressed in vascular tissues.

Its subcellular location is the nucleus. It is found in the nucleolus. The protein resides in the cytoplasm. Functionally, aminopeptidase which catalyzes the hydrolysis of amino acid residues from the N-terminus of peptide or protein substrates. The polypeptide is Aminopeptidase O (Aopep) (Mus musculus (Mouse)).